A 146-amino-acid chain; its full sequence is Hemoglobin subunit beta (146 aa).

A Globin domain is found at 2–146 (HWTAEEKQLI…VAHALARKYH (145 aa)). Heme b is bound by residues histidine 63 and histidine 92.

It belongs to the globin family. Heterotetramer of two alpha chains and two beta chains. As to expression, red blood cells.

Involved in oxygen transport from the lung to the various peripheral tissues. In Phalacrocorax carbo (Great cormorant), this protein is Hemoglobin subunit beta (HBB).